The sequence spans 260 residues: Putative ABC transporter ATP-binding protein PH0132 (260 aa).

The 233-residue stretch at 2–234 (IEFRDVWFWY…DLEGFGLKEP (233 aa)) folds into the ABC transporter domain. ATP is bound at residue 34–41 (GPNGSGKT).

It belongs to the ABC transporter superfamily.

The protein resides in the cell membrane. In terms of biological role, probably part of an ABC transporter complex. Responsible for energy coupling to the transport system. The polypeptide is Putative ABC transporter ATP-binding protein PH0132 (Pyrococcus horikoshii (strain ATCC 700860 / DSM 12428 / JCM 9974 / NBRC 100139 / OT-3)).